The following is a 506-amino-acid chain: Peptidyl-prolyl cis-trans isomerase CYP59 (506 aa).

One can recognise a PPIase cyclophilin-type domain in the interval 1-161 (MSVLIVTSLG…KNIRIKHTHI (161 aa)). The region spanning 243 to 321 (NVLFVCKLNP…RRIHVDFSQS (79 aa)) is the RRM domain. A CCHC-type zinc finger spans residues 341–357 (GCFKCGSTDHIAKDCVG). Basic and acidic residues-rich tracts occupy residues 388 to 404 (ETPK…EKIQ) and 412 to 506 (GEGK…RRDR). Residues 388-506 (ETPKHNSHER…REARHERRDR (119 aa)) form a disordered region.

The protein belongs to the cyclophilin-type PPIase family. Component of the BZR1 complex. Interacts with NRPB1 (via CTD domain), SCL28, SCL30, SCL30A, SCL33, SC35, SR30, SR34, RSZ21, RS2Z33, RS31 and RS40. As to expression, ubiquitous.

Its subcellular location is the nucleus. It carries out the reaction [protein]-peptidylproline (omega=180) = [protein]-peptidylproline (omega=0). Functionally, PPIases accelerate the folding of proteins. It catalyzes the cis-trans isomerization of proline imidic peptide bonds in oligopeptides. Influences somehow regulation of RNA pol II (CTD) phosphorylation. Binds RNA with preferences for GC-rich sequences. Probably involved in activities connecting transcription and pre-mRNA processing. Involved in brassinostroid response. This chain is Peptidyl-prolyl cis-trans isomerase CYP59 (CYP59), found in Arabidopsis thaliana (Mouse-ear cress).